A 490-amino-acid polypeptide reads, in one-letter code: Aspartyl aminopeptidase 4 (490 aa).

Histidine 97 provides a ligand contact to Zn(2+). Substrate is bound at residue histidine 173. Residues aspartate 273, glutamate 308, glutamate 309, and aspartate 362 each coordinate Zn(2+). Glutamate 308 serves as a coordination point for substrate. Residues aspartate 362, histidine 365, lysine 390, and tyrosine 397 each coordinate substrate. Position 456 (histidine 456) interacts with Zn(2+).

It belongs to the peptidase M18 family. In terms of assembly, tetrahedron-shaped homododecamer built from six homodimers. It depends on Zn(2+) as a cofactor.

It is found in the cytoplasm. The protein localises to the vacuole lumen. It catalyses the reaction Release of an N-terminal aspartate or glutamate from a peptide, with a preference for aspartate.. The metalloproteases inhibitors EDTA and 1.10-phenanthroline both inhibit the activity, whereas bestatin, an inhibitor of most aminopeptidases, does not affect enzyme activity. Aspartyl aminopeptidase that contributes to peptide degradation both in the cytosol and the vacuole. Cells may respond to environmental conditions by changing the distributions of the cytosolic enzyme to the vacuole when cells need more active vacuolar degradation. The chain is Aspartyl aminopeptidase 4 (APE4) from Saccharomyces cerevisiae (strain ATCC 204508 / S288c) (Baker's yeast).